Consider the following 485-residue polypeptide: Transcription factor E2FA (485 aa).

The span at 1 to 11 (MSGVVRSSPGS) shows a compositional bias: low complexity. Disordered regions lie at residues 1-69 (MSGV…SNNN) and 114-159 (SGFT…SPIT). Pro residues predominate over residues 12–26 (SQPPPPPPHHPPSSP). Polar residues predominate over residues 114–125 (SGFTNIPSSPCQ). Residues 129 to 141 (KGGRVNIKSKAKG) show a composition bias toward basic residues. The span at 142 to 159 (NKSTPQTPISTNAGSPIT) shows a compositional bias: polar residues. The DNA-binding element occupies 167-232 (RYDSSLGLLT…PFKNRILWKG (66 aa)). Residues 245-286 (SVLQLQAEIENLALEEQALDNQIRQTEERLRDLSENEKNQKW) adopt a coiled-coil conformation. The interval 249–277 (LQAEIENLALEEQALDNQIRQTEERLRDL) is leucine-zipper. The tract at residues 435 to 450 (DYWLLSNAEISMTDIW) is retinoblastoma protein binding.

Belongs to the E2F/DP family. Heterodimer with DP proteins. Interacts (via dimerization domain) preferentially with DPA, but also with DPB. Interacts with maize retinoblastoma-related protein RBR1. No interaction with E2FD. Highly expressed in the shoot apical meristem, emerging leaf primordia, and vascular tissues of young leaf primordia. Expressed in flowers, in epidermis and cortex of hypocotyls, and at lower levels in leaves.

It is found in the cytoplasm. The protein localises to the nucleus. In terms of biological role, transcription activator that binds DNA cooperatively with DP proteins through the E2 recognition site, 5'-TTTC[CG]CGC-3' found in the promoter region of a number of genes whose products are involved in cell cycle regulation or in DNA replication. The binding of retinoblastoma-related proteins represses transactivation. Regulates gene expression both positively and negatively. Activates the expression of E2FB. Involved in the control of cell-cycle progression from G1 to S phase. Stimulates cell proliferation and delays differentiation. In Arabidopsis thaliana (Mouse-ear cress), this protein is Transcription factor E2FA (E2FA).